The chain runs to 611 residues: Cilia- and flagella-associated protein 100 (611 aa).

Polar residues predominate over residues 1 to 17 (MSEIPSTIVSKNMTNDK). The disordered stretch occupies residues 1 to 57 (MSEIPSTIVSKNMTNDKNSLESMNISSSSSTEENPKKQARKNEEHGPDPSANPFHLS). Residues 20-32 (LESMNISSSSSTE) show a composition bias toward low complexity. The span at 33–47 (ENPKKQARKNEEHGP) shows a compositional bias: basic and acidic residues. Coiled-coil stretches lie at residues 101–128 (SLRR…RAFR), 164–203 (ALDV…FDEF), and 230–257 (LEIR…KHYK). Disordered regions lie at residues 287 to 323 (EVSE…GQGT) and 338 to 380 (SPSY…GEEP). Residues 338–357 (SPSYLSSPQQGSQPSESSGG) are compositionally biased toward low complexity. Coiled-coil stretches lie at residues 393 to 432 (VFRE…MDRE) and 526 to 578 (QVKI…RGRT).

The protein belongs to the CFAP100 family.

The protein resides in the cytoplasm. Its subcellular location is the cytoskeleton. It localises to the cilium axoneme. May play a role in ciliary/flagellar motility by regulating the assembly and the activity of axonemal inner dynein arm. This chain is Cilia- and flagella-associated protein 100, found in Homo sapiens (Human).